The primary structure comprises 113 residues: Putative pterin-4-alpha-carbinolamine dehydratase (113 aa).

The protein belongs to the pterin-4-alpha-carbinolamine dehydratase family.

It catalyses the reaction (4aS,6R)-4a-hydroxy-L-erythro-5,6,7,8-tetrahydrobiopterin = (6R)-L-erythro-6,7-dihydrobiopterin + H2O. In Legionella pneumophila (strain Lens), this protein is Putative pterin-4-alpha-carbinolamine dehydratase.